The sequence spans 337 residues: Pentalenene synthase (337 aa).

Mg(2+)-binding residues include Asp-80 and Asp-84. Positions 80 to 84 (DDLFD) match the DDXXD motif motif. An intrachain disulfide couples Cys-128 to Cys-136. Positions 219, 223, and 227 each coordinate Mg(2+).

The protein belongs to the terpene synthase family. Monomer. Mg(2+) is required as a cofactor.

The catalysed reaction is (2E,6E)-farnesyl diphosphate = pentalenene + diphosphate. Its pathway is sesquiterpene biosynthesis; pentalenene biosynthesis; pentalenene from farnesyl diphosphate: step 1/1. It functions in the pathway antibiotic biosynthesis; pentalenolactone biosynthesis. Functionally, catalyzes the cyclization of farnesyl diphosphate (FPP) to the tricyclic sesquiterpene pentalenene, which is the hydrocarbon precursor of the pentalenolactone family of antibiotics produced by a variety of Streptomyces species. This Streptomyces exfoliatus (Streptomyces hydrogenans) protein is Pentalenene synthase (penA).